The chain runs to 1642 residues: Cholesterol transporter ABCA5 (1642 aa).

Residues 32 to 52 traverse the membrane as a helical segment; it reads SVQEILFPLFFLFWLILISMM. Residue Asn86 is glycosylated (N-linked (GlcNAc...) asparagine). Helical transmembrane passes span 220 to 240, 264 to 284, 297 to 317, 328 to 348, 355 to 375, and 396 to 416; these read VILIYLVIAFSPFGYFLAIHI, LSWVLLYTSLIFLMSLLMAVI, IVIFLLFFLYGLSSVFFALML, GIVEFFVTVAFGFIGLMIILI, LVWLFSPFCHCTFVIGIAQVM, and LIITIIMLTLNSIFYVLLAVY. N-linked (GlcNAc...) asparagine glycosylation is present at Asn458. Residues 478–713 form the ABC transporter 1 domain; that stretch reads IRISGIQKTY…WGIGYRLSMY (236 aa). 514-521 provides a ligand contact to ATP; that stretch reads GHSGTGKS. 2 helical membrane passes run 866–886 and 967–987; these read LLLLLIFFTVQIFMFLVHHSF and VFAAVFNSTMVYSLPILVNII. N-linked (GlcNAc...) asparagine glycosylation is present at Asn996. 6 consecutive transmembrane segments (helical) span residues 1021–1041, 1071–1091, 1102–1122, 1139–1159, 1169–1189, and 1207–1227; these read LYFQAALLGIIVTAMPPYFAM, VVDIPLFFIILILMLGSLLAF, FLAVVFCLIGYVPSVILFTYI, FIYSVAALACIAITEITFFMG, AFCIIIPIYPLLGCLISFIKI, and LSVAVISPYLQCVLWIFLLQY. Positions 1249 to 1268 are disordered; the sequence is KSKNRKLPEPPDNEDEDEDV. A compositionally biased stretch (acidic residues) spans 1259–1268; it reads PDNEDEDEDV. In terms of domain architecture, ABC transporter 2 spans 1290–1533; sequence IMVSNLHKEY…FGKGYFLEIK (244 aa). 1333-1340 is an ATP binding site; the sequence is GPNGAGKS.

Belongs to the ABC transporter superfamily. ABCA family. N-glycosylated. In terms of tissue distribution, ubiquitously expressed. Highly expressed in testis, skeletal muscle, kidney, liver and placenta. Expressed in both the epithelial and mesenchymal compartments, present within the outer root sheath (ORS) of the hair follicle as well as dermal sheath. Expressed in multiple regions of the brain, including the hippocampus, superior frontal and inferior temporal cortices. Strongly expressed in neurons and moderately in microglia, with only weak expression in astrocytes and oligodendrocytes.

It is found in the golgi apparatus membrane. The protein resides in the lysosome membrane. Its subcellular location is the late endosome membrane. It localises to the cell membrane. It carries out the reaction cholesterol(in) + ATP + H2O = cholesterol(out) + ADP + phosphate + H(+). Its function is as follows. Cholesterol efflux transporter in macrophages that is responsible for APOAI/high-density lipoproteins (HDL) formation at the plasma membrane under high cholesterol levels and participates in reverse cholesterol transport. May play a role in the processing of autolysosomes. This is Cholesterol transporter ABCA5 from Homo sapiens (Human).